Consider the following 651-residue polypeptide: Intraflagellar transport protein 70A (651 aa).

TPR repeat units lie at residues 8-41, 42-75, 140-173, 175-207, 379-410, 411-443, and 445-478; these read DGEY…HTKS, RAAL…HPEV, PDYD…LGYQ, DLAY…GIRE, VTKQ…EKYI, PVLM…CNEH, and TWKL…HYEN. A coiled-coil region spans residues 494 to 521; that stretch reads YIMTSQNEEAEELMRKIEKEEEQISYDD. One copy of the TPR 8 repeat lies at 530-563; the sequence is CIVNLVIGTLYCAKGNYDFGISRVIKSLEPYNKK.

It belongs to the TTC30/dfy-1/fleer family. As to expression, localizes to the cilia of many ciliated epithelial cell types including pronephric cells, olfactory placode, the brain ventricle and lateral line organs.

The protein localises to the cell projection. The protein resides in the cilium. Its function is as follows. Plays a role in anterograde intraflagellar transport (IFT), the process by which cilia precursors are transported from the base of the cilium to the site of their incorporation at the tip. Required for polyglutamylation of axonemal tubulin, which is a prerequisite for correct assembly of cilia and for normal cilia beat amplitude. Does not seem to be required for neuronal microtubule polyglutamylation. The chain is Intraflagellar transport protein 70A (ift70a) from Danio rerio (Zebrafish).